The primary structure comprises 348 residues: Selenide, water dikinase (348 aa).

Residue C17 is part of the active site. ATP is bound by residues K20 and 47-49; that span reads RAD. D50 contacts Mg(2+). ATP-binding positions include D67, D90, and 138–140; that span reads GHT. Position 90 (D90) interacts with Mg(2+). D226 contacts Mg(2+).

It belongs to the selenophosphate synthase 1 family. Class I subfamily. Homodimer. It depends on Mg(2+) as a cofactor.

It carries out the reaction hydrogenselenide + ATP + H2O = selenophosphate + AMP + phosphate + 2 H(+). Synthesizes selenophosphate from selenide and ATP. The sequence is that of Selenide, water dikinase from Pelobacter propionicus (strain DSM 2379 / NBRC 103807 / OttBd1).